The primary structure comprises 144 residues: Large ribosomal subunit protein uL11 (144 aa).

The protein belongs to the universal ribosomal protein uL11 family. As to quaternary structure, part of the ribosomal stalk of the 50S ribosomal subunit. Interacts with L10 and the large rRNA to form the base of the stalk. L10 forms an elongated spine to which L12 dimers bind in a sequential fashion forming a multimeric L10(L12)X complex. In terms of processing, one or more lysine residues are methylated.

Its function is as follows. Forms part of the ribosomal stalk which helps the ribosome interact with GTP-bound translation factors. This chain is Large ribosomal subunit protein uL11, found in Granulibacter bethesdensis (strain ATCC BAA-1260 / CGDNIH1).